The primary structure comprises 139 residues: Aspartate 1-decarboxylase (139 aa).

The Schiff-base intermediate with substrate; via pyruvic acid role is filled by Ser-25. A Pyruvic acid (Ser) modification is found at Ser-25. Thr-57 provides a ligand contact to substrate. The active-site Proton donor is the Tyr-58. 73-75 is a binding site for substrate; that stretch reads GAA. The tract at residues 117-139 is disordered; it reads LGADPAEPVPGSDQARSPQAVTA. Residues 130-139 are compositionally biased toward polar residues; it reads QARSPQAVTA.

This sequence belongs to the PanD family. As to quaternary structure, heterooctamer of four alpha and four beta subunits. Requires pyruvate as cofactor. Is synthesized initially as an inactive proenzyme, which is activated by self-cleavage at a specific serine bond to produce a beta-subunit with a hydroxyl group at its C-terminus and an alpha-subunit with a pyruvoyl group at its N-terminus.

The protein resides in the cytoplasm. It catalyses the reaction L-aspartate + H(+) = beta-alanine + CO2. It functions in the pathway cofactor biosynthesis; (R)-pantothenate biosynthesis; beta-alanine from L-aspartate: step 1/1. Catalyzes the pyruvoyl-dependent decarboxylation of aspartate to produce beta-alanine. This is Aspartate 1-decarboxylase from Streptomyces avermitilis (strain ATCC 31267 / DSM 46492 / JCM 5070 / NBRC 14893 / NCIMB 12804 / NRRL 8165 / MA-4680).